Here is a 239-residue protein sequence, read N- to C-terminus: tRNA1(Val) (adenine(37)-N6)-methyltransferase (239 aa).

This sequence belongs to the methyltransferase superfamily. tRNA (adenine-N(6)-)-methyltransferase family.

The protein resides in the cytoplasm. The catalysed reaction is adenosine(37) in tRNA1(Val) + S-adenosyl-L-methionine = N(6)-methyladenosine(37) in tRNA1(Val) + S-adenosyl-L-homocysteine + H(+). In terms of biological role, specifically methylates the adenine in position 37 of tRNA(1)(Val) (anticodon cmo5UAC). This Vibrio vulnificus (strain YJ016) protein is tRNA1(Val) (adenine(37)-N6)-methyltransferase.